The following is a 112-amino-acid chain: Serum amyloid A protein (112 aa).

Q1 bears the Pyrrolidone carboxylic acid mark. The span at 75-86 (MTRDQVREDTKA) shows a compositional bias: basic and acidic residues. The tract at residues 75-112 (MTRDQVREDTKADQFANEWGRSGKDPNHFRPPGLPDKY) is disordered.

It belongs to the SAA family. As to expression, expressed by the liver; secreted in plasma.

It is found in the secreted. In terms of biological role, major acute phase reactant. Apolipoprotein of the HDL complex. This Ovis aries (Sheep) protein is Serum amyloid A protein (SAA1).